A 482-amino-acid polypeptide reads, in one-letter code: tRNA-2-methylthio-N(6)-dimethylallyladenosine synthase (482 aa).

Positions 3-120 (KKLHIKTWGC…LPEMIKQVQG (118 aa)) constitute an MTTase N-terminal domain. 6 residues coordinate [4Fe-4S] cluster: Cys12, Cys49, Cys83, Cys158, Cys162, and Cys165. In terms of domain architecture, Radical SAM core spans 144–376 (KADGPSAFVS…QNRITQMAQQ (233 aa)). In terms of domain architecture, TRAM spans 379-442 (RQMFDTEQRI…PNSLRGDLIR (64 aa)).

Belongs to the methylthiotransferase family. MiaB subfamily. In terms of assembly, monomer. [4Fe-4S] cluster serves as cofactor.

The protein resides in the cytoplasm. It catalyses the reaction N(6)-dimethylallyladenosine(37) in tRNA + (sulfur carrier)-SH + AH2 + 2 S-adenosyl-L-methionine = 2-methylsulfanyl-N(6)-dimethylallyladenosine(37) in tRNA + (sulfur carrier)-H + 5'-deoxyadenosine + L-methionine + A + S-adenosyl-L-homocysteine + 2 H(+). In terms of biological role, catalyzes the methylthiolation of N6-(dimethylallyl)adenosine (i(6)A), leading to the formation of 2-methylthio-N6-(dimethylallyl)adenosine (ms(2)i(6)A) at position 37 in tRNAs that read codons beginning with uridine. The chain is tRNA-2-methylthio-N(6)-dimethylallyladenosine synthase from Pseudoalteromonas translucida (strain TAC 125).